Consider the following 483-residue polypeptide: Cysteine proteinase 1, mitochondrial (483 aa).

The N-terminal 30 residues, 1-30, are a transit peptide targeting the mitochondrion; the sequence is MLPTSVSRSLYLKTFRSHLLRAPQIVLKRM. Residues Cys102, His398, and Asn421 contribute to the active site. A propeptide (removed in mature form; by autocatalysis) is located at residue Lys483.

The protein belongs to the peptidase C1 family. In terms of assembly, homohexamer. Binds to nucleic acids. Binds single-stranded DNA and RNA with higher affinity than double-stranded DNA. The N-terminus of isoform Cytoplasmic is blocked.

The protein resides in the mitochondrion. The protein localises to the cytoplasm. It carries out the reaction Inactivates bleomycin B2 (a cytotoxic glycometallopeptide) by hydrolysis of a carboxyamide bond of beta-aminoalanine, but also shows general aminopeptidase activity. The specificity varies somewhat with source, but amino acid arylamides of Met, Leu and Ala are preferred.. Its activity is regulated as follows. Inhibited by E64, a specific inhibitor of cysteine proteases, N-ethylmaleimide, iodacetamide, and mercury and zinc ions. Its function is as follows. The normal physiological role of the enzyme is unknown, but it is not essential for the viability of yeast cells. Has aminopeptidase activity, shortening substrate peptides sequentially by 1 amino acid. Has bleomycin hydrolase activity, which can protect the cell from the toxic effects of bleomycin. Has homocysteine-thiolactonase activity, protecting the cell against homocysteine toxicity. Acts as a repressor in the GAL4 regulatory system, but this does not require either the peptidase or nucleic acid-binding activities. The sequence is that of Cysteine proteinase 1, mitochondrial (LAP3) from Saccharomyces cerevisiae (strain JAY291) (Baker's yeast).